We begin with the raw amino-acid sequence, 97 residues long: Nucleoid-associated protein HPAG1_0033 (97 aa).

The protein belongs to the YbaB/EbfC family. As to quaternary structure, homodimer.

It is found in the cytoplasm. It localises to the nucleoid. Functionally, binds to DNA and alters its conformation. May be involved in regulation of gene expression, nucleoid organization and DNA protection. In Helicobacter pylori (strain HPAG1), this protein is Nucleoid-associated protein HPAG1_0033.